A 337-amino-acid chain; its full sequence is S-adenosylmethionine:tRNA ribosyltransferase-isomerase (337 aa).

The protein belongs to the QueA family. Monomer.

The protein localises to the cytoplasm. It carries out the reaction 7-aminomethyl-7-carbaguanosine(34) in tRNA + S-adenosyl-L-methionine = epoxyqueuosine(34) in tRNA + adenine + L-methionine + 2 H(+). Its pathway is tRNA modification; tRNA-queuosine biosynthesis. In terms of biological role, transfers and isomerizes the ribose moiety from AdoMet to the 7-aminomethyl group of 7-deazaguanine (preQ1-tRNA) to give epoxyqueuosine (oQ-tRNA). This is S-adenosylmethionine:tRNA ribosyltransferase-isomerase from Legionella pneumophila subsp. pneumophila (strain Philadelphia 1 / ATCC 33152 / DSM 7513).